A 235-amino-acid polypeptide reads, in one-letter code: NADH-quinone oxidoreductase subunit C (235 aa).

This sequence belongs to the complex I 30 kDa subunit family. As to quaternary structure, NDH-1 is composed of 14 different subunits. Subunits NuoB, C, D, E, F, and G constitute the peripheral sector of the complex.

The protein localises to the cell membrane. The enzyme catalyses a quinone + NADH + 5 H(+)(in) = a quinol + NAD(+) + 4 H(+)(out). NDH-1 shuttles electrons from NADH, via FMN and iron-sulfur (Fe-S) centers, to quinones in the respiratory chain. The immediate electron acceptor for the enzyme in this species is believed to be a menaquinone. Couples the redox reaction to proton translocation (for every two electrons transferred, four hydrogen ions are translocated across the cytoplasmic membrane), and thus conserves the redox energy in a proton gradient. The polypeptide is NADH-quinone oxidoreductase subunit C (Mycobacterium avium (strain 104)).